Here is a 112-residue protein sequence, read N- to C-terminus: Large ribosomal subunit protein uL22 (112 aa).

The protein belongs to the universal ribosomal protein uL22 family. In terms of assembly, part of the 50S ribosomal subunit.

In terms of biological role, this protein binds specifically to 23S rRNA; its binding is stimulated by other ribosomal proteins, e.g. L4, L17, and L20. It is important during the early stages of 50S assembly. It makes multiple contacts with different domains of the 23S rRNA in the assembled 50S subunit and ribosome. The globular domain of the protein is located near the polypeptide exit tunnel on the outside of the subunit, while an extended beta-hairpin is found that lines the wall of the exit tunnel in the center of the 70S ribosome. The protein is Large ribosomal subunit protein uL22 of Finegoldia magna (strain ATCC 29328 / DSM 20472 / WAL 2508) (Peptostreptococcus magnus).